Reading from the N-terminus, the 315-residue chain is Putative pyruvate, phosphate dikinase regulatory protein (315 aa).

The segment at 1 to 32 (MGPFGARASPEAGQVVKQPLTDDPQESLAQGE) is disordered. ADP is bound at residue 189-196 (GVSRTSKT).

This sequence belongs to the pyruvate, phosphate/water dikinase regulatory protein family. PDRP subfamily.

The enzyme catalyses N(tele)-phospho-L-histidyl/L-threonyl-[pyruvate, phosphate dikinase] + ADP = N(tele)-phospho-L-histidyl/O-phospho-L-threonyl-[pyruvate, phosphate dikinase] + AMP + H(+). It catalyses the reaction N(tele)-phospho-L-histidyl/O-phospho-L-threonyl-[pyruvate, phosphate dikinase] + phosphate + H(+) = N(tele)-phospho-L-histidyl/L-threonyl-[pyruvate, phosphate dikinase] + diphosphate. Functionally, bifunctional serine/threonine kinase and phosphorylase involved in the regulation of the pyruvate, phosphate dikinase (PPDK) by catalyzing its phosphorylation/dephosphorylation. This Caulobacter vibrioides (strain ATCC 19089 / CIP 103742 / CB 15) (Caulobacter crescentus) protein is Putative pyruvate, phosphate dikinase regulatory protein.